The chain runs to 86 residues: uncharacterized protein (86 aa).

This is an uncharacterized protein from Bacillus subtilis (strain 168).